The sequence spans 407 residues: Glycolate oxidase iron-sulfur subunit (407 aa).

4Fe-4S ferredoxin-type domains are found at residues 14-47 (RALE…ELDG) and 66-95 (LKTQ…HNLL). Positions 25, 28, 31, 35, 75, 78, 81, and 85 each coordinate [4Fe-4S] cluster.

The glycolate oxidase likely consists of three subunits, GlcD, GlcE and GlcF. [4Fe-4S] cluster is required as a cofactor.

It localises to the cell inner membrane. The enzyme catalyses glycolate + A = glyoxylate + AH2. The catalysed reaction is (R)-lactate + A = pyruvate + AH2. With respect to regulation, in vitro the glycolate oxidase activity is inhibited by the sulfhydryl inhibitors CuSO4 and PCMB, by KCN, but not by the metal complexing agent EDTA. Component of a complex that catalyzes the oxidation of glycolate to glyoxylate. Is required for E.coli to grow on glycolate as a sole source of carbon. Is also able to oxidize D-lactate ((R)-lactate) with a similar rate. Does not link directly to O(2), and 2,6-dichloroindophenol (DCIP) and phenazine methosulfate (PMS) can act as artificial electron acceptors in vitro, but the physiological molecule that functions as a primary electron acceptor during glycolate oxidation is unknown. This Escherichia coli (strain K12) protein is Glycolate oxidase iron-sulfur subunit.